The chain runs to 232 residues: 6-phosphogluconolactonase (232 aa).

It belongs to the glucosamine/galactosamine-6-phosphate isomerase family. 6-phosphogluconolactonase subfamily.

It catalyses the reaction 6-phospho-D-glucono-1,5-lactone + H2O = 6-phospho-D-gluconate + H(+). It functions in the pathway carbohydrate degradation; pentose phosphate pathway; D-ribulose 5-phosphate from D-glucose 6-phosphate (oxidative stage): step 2/3. Functionally, hydrolysis of 6-phosphogluconolactone to 6-phosphogluconate. The protein is 6-phosphogluconolactonase (pgl) of Caulobacter vibrioides (strain ATCC 19089 / CIP 103742 / CB 15) (Caulobacter crescentus).